The chain runs to 248 residues: NAD(P)H-quinone oxidoreductase subunit K (248 aa).

[4Fe-4S] cluster is bound by residues Cys66, Cys67, Cys131, and Cys162.

Belongs to the complex I 20 kDa subunit family. As to quaternary structure, NDH-1 can be composed of about 15 different subunits; different subcomplexes with different compositions have been identified which probably have different functions. The cofactor is [4Fe-4S] cluster.

The protein localises to the cellular thylakoid membrane. The catalysed reaction is a plastoquinone + NADH + (n+1) H(+)(in) = a plastoquinol + NAD(+) + n H(+)(out). It carries out the reaction a plastoquinone + NADPH + (n+1) H(+)(in) = a plastoquinol + NADP(+) + n H(+)(out). In terms of biological role, NDH-1 shuttles electrons from an unknown electron donor, via FMN and iron-sulfur (Fe-S) centers, to quinones in the respiratory and/or the photosynthetic chain. The immediate electron acceptor for the enzyme in this species is believed to be plastoquinone. Couples the redox reaction to proton translocation, and thus conserves the redox energy in a proton gradient. Cyanobacterial NDH-1 also plays a role in inorganic carbon-concentration. The chain is NAD(P)H-quinone oxidoreductase subunit K from Synechococcus sp. (strain WH7803).